Reading from the N-terminus, the 532-residue chain is Nectin-4 (532 aa).

Residues 1-30 (MGPLHGALLPPISVTVSLLILLLCAPGGRC) form the signal peptide. The Ig-like V-type domain occupies 31 to 142 (GVVHTEKSMT…GNFDAELELK (112 aa)). Residues 31 to 344 (GVVHTEKSMT…TKIDLVSVSL (314 aa)) lie on the Extracellular side of the membrane. 3 disulfides stabilise this stretch: Cys51/Cys125, Cys169/Cys221, and Cys266/Cys312. Ig-like C2-type domains follow at residues 146–235 (PPLP…KRIT) and 244–328 (AEVS…AIVS). The segment at 152-179 (GPGPPLTEGEGKSLAASCTAEGNPAPTL) is disordered. Asn189 and Asn282 each carry an N-linked (GlcNAc...) asparagine glycan. The chain crosses the membrane as a helical span at residues 345–365 (GSVGILTAVLLVVLVITLLLV). Residues 366–532 (NRHHKRQTKQ…IYINGRGHLV (167 aa)) lie on the Cytoplasmic side of the membrane. The disordered stretch occupies residues 453–491 (QTELLSTVPDEEVKEDGEEPEQVEQSLEKEPNPTEPDGM). Positions 461-474 (PDEEVKEDGEEPEQ) are enriched in acidic residues.

It belongs to the nectin family.

The protein resides in the cell membrane. In terms of biological role, may be involved in cell adhesion. The polypeptide is Nectin-4 (Xenopus tropicalis (Western clawed frog)).